The primary structure comprises 126 residues: Histone H2B type 1-B (126 aa).

A compositionally biased stretch (low complexity) spans 1 to 12; that stretch reads MPEPSKSAPAPK. A disordered region spans residues 1–36; sequence MPEPSKSAPAPKKGSKKAISKAQKKDGKKRKRSRKE. An N-acetylproline modification is found at proline 2. Glutamate 3 is modified (ADP-ribosyl glutamic acid). Position 6 is an N6-(2-hydroxyisobutyryl)lysine; alternate (lysine 6). The residue at position 6 (lysine 6) is an N6-(beta-hydroxybutyryl)lysine; alternate. N6-acetyllysine; alternate is present on lysine 6. Lysine 6 is subject to N6-butyryllysine; alternate. Lysine 6 bears the N6-crotonyllysine; alternate mark. Residue lysine 6 is modified to N6-lactoyllysine; alternate. Lysine 6 is covalently cross-linked (Glycyl lysine isopeptide (Lys-Gly) (interchain with G-Cter in SUMO2); alternate). At serine 7 the chain carries ADP-ribosylserine. Lysine 12 bears the N6-(beta-hydroxybutyryl)lysine; alternate mark. An N6-acetyllysine; alternate mark is found at lysine 12 and lysine 13. 2 positions are modified to N6-crotonyllysine; alternate: lysine 12 and lysine 13. Residue lysine 12 is modified to N6-lactoyllysine; alternate. An N6-(2-hydroxyisobutyryl)lysine; alternate modification is found at lysine 13. Serine 15 is subject to Phosphoserine; by STK4/MST1. An N6-acetyllysine; alternate mark is found at lysine 16, lysine 17, lysine 21, and lysine 24. N6-crotonyllysine; alternate is present on residues lysine 16, lysine 17, lysine 21, and lysine 24. N6-lactoyllysine; alternate is present on residues lysine 16, lysine 17, lysine 21, and lysine 24. An N6-glutaryllysine; alternate modification is found at lysine 17. Residues lysine 21 and lysine 24 each carry the N6-(2-hydroxyisobutyryl)lysine; alternate modification. Lysine 21 carries the post-translational modification N6-(beta-hydroxybutyryl)lysine; alternate. Lysine 21 carries the N6-butyryllysine; alternate modification. A Glycyl lysine isopeptide (Lys-Gly) (interchain with G-Cter in SUMO2); alternate cross-link involves residue lysine 21. Residue lysine 25 is modified to N6-(2-hydroxyisobutyryl)lysine. N6-(2-hydroxyisobutyryl)lysine; alternate is present on lysine 35. Lysine 35 carries the post-translational modification N6-(beta-hydroxybutyryl)lysine; alternate. Lysine 35 is subject to N6-crotonyllysine; alternate. Lysine 35 carries the post-translational modification N6-glutaryllysine; alternate. Lysine 35 bears the N6-succinyllysine; alternate mark. A Glycyl lysine isopeptide (Lys-Gly) (interchain with G-Cter in ubiquitin); alternate cross-link involves residue lysine 35. PolyADP-ribosyl glutamic acid is present on glutamate 36. Residue serine 37 is modified to Phosphoserine; by AMPK. Residues lysine 44, lysine 47, and lysine 58 each carry the N6-(2-hydroxyisobutyryl)lysine; alternate modification. Lysine 44 carries the N6-lactoyllysine; alternate modification. N6-glutaryllysine; alternate is present on residues lysine 44 and lysine 47. Residue lysine 47 is modified to N6-methyllysine; alternate. An N6,N6-dimethyllysine; alternate modification is found at lysine 58. A Dimethylated arginine modification is found at arginine 80. Lysine 86 is subject to N6-(2-hydroxyisobutyryl)lysine; alternate. The residue at position 86 (lysine 86) is an N6-acetyllysine; alternate. An N6-lactoyllysine; alternate modification is found at lysine 86. At lysine 86 the chain carries N6,N6,N6-trimethyllysine; alternate. 2 positions are modified to omega-N-methylarginine: arginine 87 and arginine 93. Lysine 109 is subject to N6-(2-hydroxyisobutyryl)lysine; alternate. N6-(beta-hydroxybutyryl)lysine; alternate is present on lysine 109. An N6-lactoyllysine; alternate modification is found at lysine 109. Lysine 109 carries the N6-glutaryllysine; alternate modification. At lysine 109 the chain carries N6-methyllysine; alternate. O-linked (GlcNAc) serine glycosylation occurs at serine 113. Threonine 116 carries the post-translational modification Phosphothreonine. N6-(2-hydroxyisobutyryl)lysine; alternate is present on residues lysine 117 and lysine 121. Lysine 117 is subject to N6-(beta-hydroxybutyryl)lysine; alternate. Lysine 117 and lysine 121 each carry N6-lactoyllysine; alternate. N6-glutaryllysine; alternate is present on residues lysine 117 and lysine 121. 2 positions are modified to N6-succinyllysine; alternate: lysine 117 and lysine 121. Lysine 117 is modified (N6-methylated lysine; alternate). A Glycyl lysine isopeptide (Lys-Gly) (interchain with G-Cter in ubiquitin); alternate cross-link involves residue lysine 121.

This sequence belongs to the histone H2B family. The nucleosome is a histone octamer containing two molecules each of H2A, H2B, H3 and H4 assembled in one H3-H4 heterotetramer and two H2A-H2B heterodimers. The octamer wraps approximately 147 bp of DNA. Monoubiquitination at Lys-35 (H2BK34Ub) by the MSL1/MSL2 dimer is required for histone H3 'Lys-4' (H3K4me) and 'Lys-79' (H3K79me) methylation and transcription activation at specific gene loci, such as HOXA9 and MEIS1 loci. Similarly, monoubiquitination at Lys-121 (H2BK120Ub) by the RNF20/40 complex gives a specific tag for epigenetic transcriptional activation and is also prerequisite for histone H3 'Lys-4' and 'Lys-79' methylation. It also functions cooperatively with the FACT dimer to stimulate elongation by RNA polymerase II. H2BK120Ub also acts as a regulator of mRNA splicing: deubiquitination by USP49 is required for efficient cotranscriptional splicing of a large set of exons. In terms of processing, phosphorylated on Ser-15 (H2BS14ph) by STK4/MST1 during apoptosis; which facilitates apoptotic chromatin condensation. Also phosphorylated on Ser-15 in response to DNA double strand breaks (DSBs), and in correlation with somatic hypermutation and immunoglobulin class-switch recombination. Phosphorylation at Ser-37 (H2BS36ph) by AMPK in response to stress promotes transcription. Post-translationally, glcNAcylation at Ser-113 promotes monoubiquitination of Lys-121. It fluctuates in response to extracellular glucose, and associates with transcribed genes. ADP-ribosylated by PARP1 or PARP2 on Ser-7 (H2BS6ADPr) in response to DNA damage. H2BS6ADPr promotes recruitment of CHD1L. Mono-ADP-ribosylated on Glu-3 (H2BE2ADPr) by PARP3 in response to single-strand breaks. Poly ADP-ribosylation on Glu-36 (H2BE35ADPr) by PARP1 regulates adipogenesis: it inhibits phosphorylation at Ser-37 (H2BS36ph), thereby blocking expression of pro-adipogenetic genes. In terms of processing, hydroxybutyrylation of histones is induced by starvation. Post-translationally, crotonylation (Kcr) is specifically present in male germ cells and marks testis-specific genes in post-meiotic cells, including X-linked genes that escape sex chromosome inactivation in haploid cells. Crotonylation marks active promoters and enhancers and confers resistance to transcriptional repressors. It is also associated with post-meiotically activated genes on autosomes. Lactylated in macrophages by EP300/P300 by using lactoyl-CoA directly derived from endogenous or exogenous lactate, leading to stimulates gene transcription.

The protein localises to the nucleus. It is found in the chromosome. Its function is as follows. Core component of nucleosome. Nucleosomes wrap and compact DNA into chromatin, limiting DNA accessibility to the cellular machineries which require DNA as a template. Histones thereby play a central role in transcription regulation, DNA repair, DNA replication and chromosomal stability. DNA accessibility is regulated via a complex set of post-translational modifications of histones, also called histone code, and nucleosome remodeling. This Mus musculus (Mouse) protein is Histone H2B type 1-B.